The primary structure comprises 90 residues: Small ribosomal subunit protein bS20 (90 aa).

The protein belongs to the bacterial ribosomal protein bS20 family.

Binds directly to 16S ribosomal RNA. This chain is Small ribosomal subunit protein bS20, found in Fusobacterium nucleatum subsp. nucleatum (strain ATCC 25586 / DSM 15643 / BCRC 10681 / CIP 101130 / JCM 8532 / KCTC 2640 / LMG 13131 / VPI 4355).